The chain runs to 81 residues: ATP synthase subunit c, chloroplastic (81 aa).

Transmembrane regions (helical) follow at residues 3 to 23 and 53 to 73; these read PLISAASVIAAGLAVGLASIG and LLLSLAFMEALTIYGLVVALA.

Belongs to the ATPase C chain family. F-type ATPases have 2 components, F(1) - the catalytic core - and F(0) - the membrane proton channel. F(1) has five subunits: alpha(3), beta(3), gamma(1), delta(1), epsilon(1). F(0) has four main subunits: a(1), b(1), b'(1) and c(10-14). The alpha and beta chains form an alternating ring which encloses part of the gamma chain. F(1) is attached to F(0) by a central stalk formed by the gamma and epsilon chains, while a peripheral stalk is formed by the delta, b and b' chains.

Its subcellular location is the plastid. It is found in the chloroplast thylakoid membrane. Functionally, f(1)F(0) ATP synthase produces ATP from ADP in the presence of a proton or sodium gradient. F-type ATPases consist of two structural domains, F(1) containing the extramembraneous catalytic core and F(0) containing the membrane proton channel, linked together by a central stalk and a peripheral stalk. During catalysis, ATP synthesis in the catalytic domain of F(1) is coupled via a rotary mechanism of the central stalk subunits to proton translocation. Its function is as follows. Key component of the F(0) channel; it plays a direct role in translocation across the membrane. A homomeric c-ring of between 10-14 subunits forms the central stalk rotor element with the F(1) delta and epsilon subunits. The polypeptide is ATP synthase subunit c, chloroplastic (Huperzia lucidula (Shining clubmoss)).